Consider the following 879-residue polypeptide: Leucine--tRNA ligase (879 aa).

The 'HIGH' region signature appears at 45 to 55 (PYPSGALHMGH). Residues 637-641 (KMSKS) carry the 'KMSKS' region motif. ATP is bound at residue lysine 640.

The protein belongs to the class-I aminoacyl-tRNA synthetase family.

The protein resides in the cytoplasm. It catalyses the reaction tRNA(Leu) + L-leucine + ATP = L-leucyl-tRNA(Leu) + AMP + diphosphate. This Xylella fastidiosa (strain 9a5c) protein is Leucine--tRNA ligase.